A 325-amino-acid polypeptide reads, in one-letter code: tRNA N6-adenosine threonylcarbamoyltransferase (325 aa).

The Fe cation site is built by histidine 107, histidine 111, and tyrosine 127. Substrate-binding positions include 127 to 131 (YVSGG), aspartate 159, glycine 172, glutamate 176, and asparagine 257. Aspartate 285 is a Fe cation binding site.

The protein belongs to the KAE1 / TsaD family. In terms of assembly, monomer. Component of the KEOPS complex that consists of Kae1, Bud32, Cgi121 and Pcc1; the whole complex dimerizes. It depends on Fe(2+) as a cofactor.

The protein localises to the cytoplasm. It catalyses the reaction L-threonylcarbamoyladenylate + adenosine(37) in tRNA = N(6)-L-threonylcarbamoyladenosine(37) in tRNA + AMP + H(+). Its function is as follows. Required for the formation of a threonylcarbamoyl group on adenosine at position 37 (t(6)A37) in tRNAs that read codons beginning with adenine. Is a component of the KEOPS complex that is probably involved in the transfer of the threonylcarbamoyl moiety of threonylcarbamoyl-AMP (TC-AMP) to the N6 group of A37. Kae1 likely plays a direct catalytic role in this reaction, but requires other protein(s) of the complex to fulfill this activity. This Thermococcus gammatolerans (strain DSM 15229 / JCM 11827 / EJ3) protein is tRNA N6-adenosine threonylcarbamoyltransferase.